The following is a 48-amino-acid chain: Large ribosomal subunit protein eL40 (48 aa).

It belongs to the eukaryotic ribosomal protein eL40 family.

This Methanoregula boonei (strain DSM 21154 / JCM 14090 / 6A8) protein is Large ribosomal subunit protein eL40.